Here is a 441-residue protein sequence, read N- to C-terminus: MPPQQEQDTDSDAIRSYNEESKSETPGCIPDAMLSSDETSNDVASDISPPPDGGWNAWLCTLCGHFLFMNTWGFINSFGIFQTYYTTFLDRDPSDISWIGSIQVFLSFFVGAFVGRYIDSGHLRLVLSCGTILVLIGIFTASLSTQYWQLILSQGICCGLGNGFLVTPAVSVTSTYFAKRRSLAIGISTCGSVTGALVFNSMARQLLPTAGFGWTMRAIGFVQAATLLFVVVAMKTRLPPTKSGRLVEWVAFKQLDYTFFTIGMFFNFWAVFFGYYYIAPYSRDIITPTLTYTQSLNLLLILNGVGVFGRMIANHYADTFGPLELLIPTCLVAAVATFSWIAVDTPTHAYVWTVFYGIIGGSILSLFPAGISCLTTDLSTRGAYIGMNFTVISFATLTGNPIAGAIITAMQGRYYGAQAFMGSSFIVGTAFIVAAKMNHVK.

The segment at 1–47 (MPPQQEQDTDSDAIRSYNEESKSETPGCIPDAMLSSDETSNDVASDI) is disordered. A run of 10 helical transmembrane segments spans residues 61 to 81 (TLCG…FGIF), 95 to 115 (DISW…AFVG), 125 to 145 (LVLS…SLST), 150 to 170 (LILS…TPAV), 183 to 203 (LAIG…NSMA), 212 to 232 (FGWT…FVVV), 259 to 279 (FFTI…YYIA), 289 to 309 (TLTY…GVFG), 323 to 343 (LELL…WIAV), and 351 to 371 (VWTV…PAGI). Asn-388 carries an N-linked (GlcNAc...) asparagine glycan. 2 consecutive transmembrane segments (helical) span residues 389-409 (FTVI…IITA) and 415-435 (YGAQ…IVAA).

This sequence belongs to the major facilitator superfamily. Monocarboxylate porter (TC 2.A.1.13) family.

It localises to the membrane. In terms of biological role, MFS-type transporter; part of the gene cluster that mediates the biosynthesis of butenolide, a mycotoxin that shows antibiotic activity but does not seem to play a major role in the spread of head blight in wheat. This is MFS-type transporter from Gibberella zeae (strain ATCC MYA-4620 / CBS 123657 / FGSC 9075 / NRRL 31084 / PH-1) (Wheat head blight fungus).